We begin with the raw amino-acid sequence, 213 residues long: CDP-diacylglycerol--inositol 3-phosphatidyltransferase (213 aa).

Residues 1–5 (MPEEN) are Cytoplasmic-facing. Residues 6–26 (IFLFVPNLIGYARIVFAIISF) form a helical membrane-spanning segment. Residue Y27 is a topological domain, lumenal. The helical transmembrane segment at 28–48 (FMPCCPFTASSFYLLSGLLDA) threads the bilayer. Mg(2+)-binding residues include D47 and D50. At 49 to 73 (FDGHAARALNQGTRFGAMLDMLTDR) the chain is on the cytoplasmic side. The a CDP-1,2-diacyl-sn-glycerol site is built by G51, R55, and T61. Residues D68 and D72 each contribute to the Mg(2+) site. The Proton acceptor role is filled by D72. Residues 74 to 94 (CATMCLLVNLALLYPRATLLF) traverse the membrane as a helical segment. Q95 is a topological domain (lumenal). The helical transmembrane segment at 96–116 (LSMSLDVASHWLHLHSSVVRG) threads the bilayer. The Cytoplasmic portion of the chain corresponds to 117–139 (SESHKMIDLSGNPVLRIYYTSRP). Residues 140-160 (ALFTLCAGNELFYCLLYLFNF) form a helical membrane-spanning segment. The Lumenal portion of the chain corresponds to 161 to 174 (SEGPLVGSVGLFRM). Residues 175-195 (GLWITAPIALLKSIISVIHLV) traverse the membrane as a helical segment. The Cytoplasmic segment spans residues 196-213 (TAARNMAALDAADRAKKK).

It belongs to the CDP-alcohol phosphatidyltransferase class-I family. Mn(2+) serves as cofactor. It depends on Mg(2+) as a cofactor. As to expression, detected in liver (at protein level). Widely expressed. Highly expressed in the brain and kidney; lower levels in heart, spleen, lung, liver, skeletal muscle and testis.

The protein resides in the endoplasmic reticulum membrane. The protein localises to the cell membrane. It catalyses the reaction a CDP-1,2-diacyl-sn-glycerol + myo-inositol = a 1,2-diacyl-sn-glycero-3-phospho-(1D-myo-inositol) + CMP + H(+). Functionally, catalyzes the biosynthesis of phosphatidylinositol (PtdIns) as well as PtdIns:inositol exchange reaction. May thus act to reduce an excessive cellular PtdIns content. The exchange activity is due to the reverse reaction of PtdIns synthase and is dependent on CMP, which is tightly bound to the enzyme. The polypeptide is CDP-diacylglycerol--inositol 3-phosphatidyltransferase (Rattus norvegicus (Rat)).